The following is a 309-amino-acid chain: Ornithine carbamoyltransferase (309 aa).

Residues 56–59 (STRT), glutamine 83, arginine 107, and 134–137 (HPCQ) contribute to the carbamoyl phosphate site. Residues asparagine 165, aspartate 223, and 227-228 (SM) contribute to the L-ornithine site. Residues 263–264 (CL) and arginine 291 each bind carbamoyl phosphate.

This sequence belongs to the aspartate/ornithine carbamoyltransferase superfamily. OTCase family.

It is found in the cytoplasm. It catalyses the reaction carbamoyl phosphate + L-ornithine = L-citrulline + phosphate + H(+). The protein operates within amino-acid biosynthesis; L-arginine biosynthesis; L-arginine from L-ornithine and carbamoyl phosphate: step 1/3. In terms of biological role, reversibly catalyzes the transfer of the carbamoyl group from carbamoyl phosphate (CP) to the N(epsilon) atom of ornithine (ORN) to produce L-citrulline. This Burkholderia lata (strain ATCC 17760 / DSM 23089 / LMG 22485 / NCIMB 9086 / R18194 / 383) protein is Ornithine carbamoyltransferase.